The primary structure comprises 303 residues: Recombination-associated protein RdgC (303 aa).

Belongs to the RdgC family.

The protein resides in the cytoplasm. It localises to the nucleoid. Functionally, may be involved in recombination. The sequence is that of Recombination-associated protein RdgC from Shewanella piezotolerans (strain WP3 / JCM 13877).